We begin with the raw amino-acid sequence, 333 residues long: MARHSFFCVDGHTCGNPVRLVAGGGPNLNGSTMMEKRAHFLAEYDWIRTGLMFEPRGHDMMSGSILYPPTRPDCDVAVLFIETSGCLPMCGHGTIGTVTMAIEQGLVTPKTPGKLNLDTPAGLVAIEYEQDGQYVERVRLTNVPAFLYAEGLEVECPDLGPIKVDVAYGGNFYAIVEPQENYTDMDDYSALQLIAWSPVLRQRLNEKYKFQHPELPDINRLSHILWTGKPEHPQAHARNAVFYGDKAIDRSPCGTGTSARMAQLAAKGKLKPGDEFIHESIIGSLFHGRVERAAEVAGRPAIVPSIAGWARMTGYNTIFIDDRDPFAHGFSVA.

The active-site Proton acceptor is the cysteine 90. Residues 91–92 (GH) and aspartate 249 contribute to the substrate site. The Proton donor role is filled by cysteine 253. 254–255 (GT) contacts substrate.

This sequence belongs to the proline racemase family. Homodimer.

It catalyses the reaction trans-4-hydroxy-L-proline = cis-4-hydroxy-D-proline. In terms of biological role, allows intracellular utilization of 4-hydroxyproline, one of the major constituents of host collagen, by converting 4-hydroxy-L-proline to 4-hydroxy-D-proline, which can be further metabolized by intracellular 4-hydroxy-D-proline oxidases. Strong B-cell mitogen. Plays an important role in the regulation of intra- and extracellular amino acid pools, allowing the bacterium to profit from host precursors and enzymatic pathways. This Brucella suis (strain ATCC 23445 / NCTC 10510) protein is 4-hydroxyproline epimerase.